Here is a 428-residue protein sequence, read N- to C-terminus: Serine hydroxymethyltransferase (428 aa).

Position 120–122 (glycine 120–isoleucine 122) interacts with (6S)-5,6,7,8-tetrahydrofolate. Position 226 is an N6-(pyridoxal phosphate)lysine (lysine 226).

Belongs to the SHMT family. As to quaternary structure, homodimer. It depends on pyridoxal 5'-phosphate as a cofactor.

The protein resides in the cytoplasm. The catalysed reaction is 5,10-methylenetetrahydromethanopterin + glycine + H2O = 5,6,7,8-tetrahydromethanopterin + L-serine. Its pathway is amino-acid biosynthesis; glycine biosynthesis; glycine from L-serine: step 1/1. Its function is as follows. Catalyzes the reversible interconversion of serine and glycine with tetrahydromethanopterin (H4MPT) serving as the one-carbon carrier. Also exhibits a pteridine-independent aldolase activity toward beta-hydroxyamino acids, producing glycine and aldehydes, via a retro-aldol mechanism. In Methanopyrus kandleri (strain AV19 / DSM 6324 / JCM 9639 / NBRC 100938), this protein is Serine hydroxymethyltransferase.